The sequence spans 381 residues: MAFISSGYNPEKPMANRITDIGPRKFDEFFPPVIAKNFGSWLYHEILEPGVLMHVAESGDKVYTVRVGAARLMSITHIREMCDIADKYCGGHLRFTTRNNVEFMVADEASLKALKEDLASRKFDGGSLKFPIGGTGAGVSNIVHTQGWVHCHTPATDASGPVKAIMDEVFEDFQSMRLPAPVRISLACCINMCGAVHCSDIGVVGIHRKPPMIDHEWTDQLCEIPLAVASCPTAAVRPTKLEIGDKKVNTIAIKNERCMYCGNCYTMCPALPISDGEGDGVVIMVGGKVSNRISMPKFSKVVVAYIPNEPPRWPSLTKTIKHIIEVYSANAYKYERLGEWAERIGWERFFSLTGLEFSHHLIDDFRDPAYYTWRQSTQFKF.

Residues Cys-151, Cys-188, Cys-189, Cys-193, Cys-231, Cys-258, Cys-261, and Cys-264 each contribute to the [4Fe-4S] cluster site. Residue Cys-193 coordinates siroheme. A 4Fe-4S ferredoxin-type domain is found at 249 to 276 (NTIAIKNERCMYCGNCYTMCPALPISDG).

In terms of assembly, heterohexamer of two alpha, two beta and two gamma subunits. It depends on [4Fe-4S] cluster as a cofactor. Siroheme is required as a cofactor.

It carries out the reaction [DsrC protein]-trisulfide + NAD(+) + 3 H2O = [DsrC protein]-dithiol + sulfite + NADH + 3 H(+). Its function is as follows. Catalyzes the reduction of sulfite to sulfide. This is the terminal oxidation reaction in sulfate respiration, a process catalyzed by the sulfate-reducing bacteria. This chain is Sulfite reductase, dissimilatory-type subunit beta (dsvB), found in Nitratidesulfovibrio vulgaris (strain ATCC 29579 / DSM 644 / CCUG 34227 / NCIMB 8303 / VKM B-1760 / Hildenborough) (Desulfovibrio vulgaris).